The following is an 801-amino-acid chain: Xaa-Pro dipeptidyl-peptidase (801 aa).

Catalysis depends on charge relay system residues serine 371, aspartate 491, and histidine 522.

The protein belongs to the peptidase S15 family. As to quaternary structure, homodimer.

The protein localises to the cytoplasm. It carries out the reaction Hydrolyzes Xaa-Pro-|- bonds to release unblocked, N-terminal dipeptides from substrates including Ala-Pro-|-p-nitroanilide and (sequentially) Tyr-Pro-|-Phe-Pro-|-Gly-Pro-|-Ile.. In terms of biological role, removes N-terminal dipeptides sequentially from polypeptides having unsubstituted N-termini provided that the penultimate residue is proline. In Ligilactobacillus salivarius (strain UCC118) (Lactobacillus salivarius), this protein is Xaa-Pro dipeptidyl-peptidase.